The chain runs to 188 residues: MHRNDSQRLGKPGGAPESLQMANNNFLSTLSPEHCRPLAGECMNKLKCGAAEAEIMNLPERVGTFSAIPALGGISLPPGVIVMTALHSPAAASAAVTDSAFQIANLADCPQNNSSGAGGNPAKKKRKRCGVCVPCKRLINCGVCSSCRNRKTGHQICKFRKCEELKKKPGTSLERTPVPSAEAFRWFF.

Positions 1-20 (MHRNDSQRLGKPGGAPESLQ) are disordered. A CXXC-type zinc finger spans residues 122-163 (AKKKRKRCGVCVPCKRLINCGVCSSCRNRKTGHQICKFRKCE). Cys-129, Cys-132, Cys-135, Cys-141, Cys-144, Cys-147, Cys-157, and Cys-162 together coordinate Zn(2+).

The protein resides in the cytoplasm. Acts as a negative regulator of the Wnt signaling pathway required for anterior neural structure formation. Binds preferentially to DNA containing cytidine-phosphate-guanosine (CpG) dinucleotides over CpH (H=A, T, and C), hemimethylated-CpG and hemimethylated-hydroxymethyl-CpG. This Xenopus tropicalis (Western clawed frog) protein is CXXC-type zinc finger protein 4 (cxxc4).